The following is an 876-amino-acid chain: Paramyosin (876 aa).

The interval 1–28 (MSARSAKFMYRSGNAGASGDLSVEYGTD) is nonhelical region. Residues 29–855 (LGALTRLEDK…IRAKHRSWVT (827 aa)) are a coiled coil. The tract at residues 856–876 (TSQVPGGTRQVFVTQEEQSNY) is nonhelical region.

It belongs to the paramyosin family. Homodimer.

The protein resides in the cytoplasm. It localises to the myofibril. Functionally, paramyosin is a major structural component of many thick filaments isolated from invertebrate muscles. This chain is Paramyosin, found in Sarcoptes scabiei (Itch mite).